The primary structure comprises 631 residues: tRNA uridine 5-carboxymethylaminomethyl modification enzyme MnmG (631 aa).

Residues 13–18 (GGGHAG), V125, and S180 each bind FAD. 273-287 (GPRYCPSIEDKVMRF) contributes to the NAD(+) binding site. Q370 contacts FAD.

The protein belongs to the MnmG family. In terms of assembly, homodimer. Heterotetramer of two MnmE and two MnmG subunits. It depends on FAD as a cofactor.

Its subcellular location is the cytoplasm. In terms of biological role, NAD-binding protein involved in the addition of a carboxymethylaminomethyl (cmnm) group at the wobble position (U34) of certain tRNAs, forming tRNA-cmnm(5)s(2)U34. This Vibrio atlanticus (strain LGP32) (Vibrio splendidus (strain Mel32)) protein is tRNA uridine 5-carboxymethylaminomethyl modification enzyme MnmG.